Here is a 480-residue protein sequence, read N- to C-terminus: Aspartyl/glutamyl-tRNA(Asn/Gln) amidotransferase subunit B (480 aa).

Belongs to the GatB/GatE family. GatB subfamily. Heterotrimer of A, B and C subunits.

The catalysed reaction is L-glutamyl-tRNA(Gln) + L-glutamine + ATP + H2O = L-glutaminyl-tRNA(Gln) + L-glutamate + ADP + phosphate + H(+). The enzyme catalyses L-aspartyl-tRNA(Asn) + L-glutamine + ATP + H2O = L-asparaginyl-tRNA(Asn) + L-glutamate + ADP + phosphate + 2 H(+). Its function is as follows. Allows the formation of correctly charged Asn-tRNA(Asn) or Gln-tRNA(Gln) through the transamidation of misacylated Asp-tRNA(Asn) or Glu-tRNA(Gln) in organisms which lack either or both of asparaginyl-tRNA or glutaminyl-tRNA synthetases. The reaction takes place in the presence of glutamine and ATP through an activated phospho-Asp-tRNA(Asn) or phospho-Glu-tRNA(Gln). This is Aspartyl/glutamyl-tRNA(Asn/Gln) amidotransferase subunit B from Streptococcus agalactiae serotype III (strain NEM316).